A 306-amino-acid chain; its full sequence is ATP-dependent (S)-NAD(P)H-hydrate dehydratase (306 aa).

The 297-residue stretch at 4-300 folds into the YjeF C-terminal domain; that stretch reads LIDLFKPMIP…NQISNGFEDL (297 aa). (6S)-NADPHX-binding positions include glycine 104 and 157-163; that span reads NFVEFKS. Residues 197-201 and 216-225 each bind ATP; these read KGKED and GMPRRCGGQG. (6S)-NADPHX is bound at residue aspartate 226.

The protein belongs to the NnrD/CARKD family. It depends on Mg(2+) as a cofactor.

The catalysed reaction is (6S)-NADHX + ATP = ADP + phosphate + NADH + H(+). It catalyses the reaction (6S)-NADPHX + ATP = ADP + phosphate + NADPH + H(+). Functionally, catalyzes the dehydration of the S-form of NAD(P)HX at the expense of ATP, which is converted to ADP. Together with NAD(P)HX epimerase, which catalyzes the epimerization of the S- and R-forms, the enzyme allows the repair of both epimers of NAD(P)HX, a damaged form of NAD(P)H that is a result of enzymatic or heat-dependent hydration. The sequence is that of ATP-dependent (S)-NAD(P)H-hydrate dehydratase from Dictyostelium discoideum (Social amoeba).